The primary structure comprises 894 residues: Peroxisomal hydratase-dehydrogenase-epimerase (894 aa).

Short-chain dehydrogenase like stretches follow at residues 6-230 and 311-523; these read RFDG…HKNN and DFKG…CSDK. Residues V14, K53, N99, R132, Y164, K168, and A197 each contribute to the NADP(+) site. The active-site Proton acceptor is the Y164. K168 functions as the Lowers pKa of active site Tyr in the catalytic mechanism. The active-site Proton acceptor is Y458. Residues H693, G694, and K723 each contribute to the (3R)-3-hydroxydecanoyl-CoA site. The tract at residues 763 to 782 is disordered; it reads KKPADRGASTAANKPPARSP. The region spanning 776 to 887 is the MaoC-like domain; sequence KPPARSPDAV…VKETGKLAIS (112 aa). (3R)-3-hydroxydecanoyl-CoA-binding residues include D803, N805, G826, F851, and G853.

It belongs to the short-chain dehydrogenases/reductases (SDR) family. Monomer.

It localises to the peroxisome. It catalyses the reaction a (3R)-3-hydroxyacyl-CoA = a (2E)-enoyl-CoA + H2O. The catalysed reaction is a (3R)-3-hydroxyacyl-CoA + NAD(+) = a 3-oxoacyl-CoA + NADH + H(+). It participates in lipid metabolism; fatty acid beta-oxidation. In terms of biological role, second trifunctional enzyme acting on the beta-oxidation pathway for fatty acids, possessing hydratase-dehydrogenase-epimerase activities. Converts trans-2-enoyl-CoA via D-3-hydroxyacyl-CoA to 3-ketoacyl-CoA. The polypeptide is Peroxisomal hydratase-dehydrogenase-epimerase (fox-2) (Neurospora crassa (strain ATCC 24698 / 74-OR23-1A / CBS 708.71 / DSM 1257 / FGSC 987)).